Reading from the N-terminus, the 637-residue chain is Limonene synthase, chloroplastic (637 aa).

A chloroplast-targeting transit peptide spans Met1–Thr56. Residues Asp388, Asp392, and Asp540 each contribute to the Mg(2+) site. Residues Asp388–Asp392 carry the DDXXD motif motif.

This sequence belongs to the terpene synthase family. Tpsd subfamily. It depends on Mg(2+) as a cofactor. Mn(2+) serves as cofactor. K(+) is required as a cofactor.

The protein resides in the plastid. It localises to the chloroplast. The catalysed reaction is (2E)-geranyl diphosphate = (4S)-limonene + diphosphate. It functions in the pathway terpene metabolism; oleoresin biosynthesis. Its function is as follows. Involved in defensive oleoresin formation in conifers in response to insect attack or other injury. Involved in monoterpene (C10) olefins biosynthesis. This chain is Limonene synthase, chloroplastic (ag10), found in Abies grandis (Grand fir).